A 183-amino-acid chain; its full sequence is Ribosome rescue factor SmrB (183 aa).

The 76-residue stretch at 98-173 (LDLHGLTQLQ…GDAALLVLIE (76 aa)) folds into the Smr domain.

The protein belongs to the SmrB family. In terms of assembly, associates with collided ribosomes, but not with correctly translating polysomes.

Its function is as follows. Acts as a ribosome collision sensor. Detects stalled/collided disomes (pairs of ribosomes where the leading ribosome is stalled and a second ribosome has collided with it) and endonucleolytically cleaves mRNA at the 5' boundary of the stalled ribosome. Stalled/collided disomes form a new interface (primarily via the 30S subunits) that binds SmrB. Cleaved mRNA becomes available for tmRNA ligation, leading to ribosomal subunit dissociation and rescue of stalled ribosomes. The chain is Ribosome rescue factor SmrB from Salmonella paratyphi A (strain ATCC 9150 / SARB42).